A 380-amino-acid chain; its full sequence is Probable G-protein coupled receptor 132 (380 aa).

The Extracellular portion of the chain corresponds to 1–45 (MCPMLLKNGYNGNATPVTTTAPWASLGLSAKTCNNVSFEESRIVL). Residue Asn35 is glycosylated (N-linked (GlcNAc...) asparagine). The helical transmembrane segment at 46–68 (VVVYSAVCTLGVPANCLTAWLAL) threads the bilayer. Residues 69 to 79 (LQVLQGNVLAV) lie on the Cytoplasmic side of the membrane. A helical transmembrane segment spans residues 80–102 (YLLCLALCELLYTGTLPLWVIYI). Residues 103–116 (RNQHRWTLGLLACK) lie on the Extracellular side of the membrane. The cysteines at positions 115 and 186 are disulfide-linked. A helical transmembrane segment spans residues 117-138 (VTAYIFFCNIYVSILFLCCISC). The Cytoplasmic portion of the chain corresponds to 139–158 (DRFVAVVYALESRGRRRRRT). A helical membrane pass occupies residues 159-178 (AILISACIFILVGIVHYPVF). Residues 179–197 (QTEDKETCFDMLQMDSRIA) lie on the Extracellular side of the membrane. Residues 198–220 (GYYYARFTVGFAIPLSIIAFTNH) traverse the membrane as a helical segment. Residues 221 to 246 (RIFRSIKQSMGLSAAQKAKVKHSAIA) are Cytoplasmic-facing. A helical transmembrane segment spans residues 247-269 (VVVIFLVCFAPYHLVLLVKAAAF). Over 270–288 (SYYRGDRNAMCGLEERLYT) the chain is Extracellular. The chain crosses the membrane as a helical span at residues 289-311 (ASVVFLCLSTVNGVADPIIYVLA). The Cytoplasmic portion of the chain corresponds to 312–380 (TDHSRQEVSR…PAKRLIEESC (69 aa)).

This sequence belongs to the G-protein coupled receptor 1 family. Highly expressed in macrophages and hematopoietic tissues rich in lymphocytes, like spleen and thymus. Weakly expressed in heart and lung. In atherosclerotic plaques, expression is observed around the lipid core and at the shoulder region.

The protein localises to the cell membrane. In terms of biological role, may be a receptor for oxidized free fatty acids derived from linoleic and arachidonic acids such as 9-hydroxyoctadecadienoic acid (9-HODE). Activates a G alpha protein, most likely G alpha(q). May be involved in apoptosis. Functions at the G2/M checkpoint to delay mitosis. May function as a sensor that monitors the oxidative states and mediates appropriate cellular responses such as secretion of paracrine signals and attenuation of proliferation. May mediate ths accumulation of intracellular inositol phosphates at acidic pH through proton-sensing activity. The protein is Probable G-protein coupled receptor 132 (GPR132) of Homo sapiens (Human).